Here is a 429-residue protein sequence, read N- to C-terminus: Enolase (429 aa).

Residue glutamine 163 coordinates (2R)-2-phosphoglycerate. Glutamate 205 (proton donor) is an active-site residue. Mg(2+) is bound by residues aspartate 242, glutamate 287, and aspartate 314. Residues lysine 339, arginine 368, serine 369, and lysine 390 each contribute to the (2R)-2-phosphoglycerate site. Residue lysine 339 is the Proton acceptor of the active site.

Belongs to the enolase family. It depends on Mg(2+) as a cofactor.

It is found in the cytoplasm. The protein localises to the secreted. The protein resides in the cell surface. It catalyses the reaction (2R)-2-phosphoglycerate = phosphoenolpyruvate + H2O. The protein operates within carbohydrate degradation; glycolysis; pyruvate from D-glyceraldehyde 3-phosphate: step 4/5. Catalyzes the reversible conversion of 2-phosphoglycerate (2-PG) into phosphoenolpyruvate (PEP). It is essential for the degradation of carbohydrates via glycolysis. This Anaeromyxobacter sp. (strain Fw109-5) protein is Enolase.